Reading from the N-terminus, the 502-residue chain is Putative diacyglycerol O-acyltransferase MT1809 (502 aa).

The active-site Proton acceptor is the H174.

Belongs to the long-chain O-acyltransferase family.

The enzyme catalyses an acyl-CoA + a 1,2-diacyl-sn-glycerol = a triacyl-sn-glycerol + CoA. The protein operates within glycerolipid metabolism; triacylglycerol biosynthesis. In Mycobacterium tuberculosis (strain CDC 1551 / Oshkosh), this protein is Putative diacyglycerol O-acyltransferase MT1809.